A 259-amino-acid chain; its full sequence is Pyridoxine 5'-phosphate synthase (259 aa).

Asparagine 6 provides a ligand contact to 3-amino-2-oxopropyl phosphate. 8 to 9 (DH) contacts 1-deoxy-D-xylulose 5-phosphate. 3-amino-2-oxopropyl phosphate is bound at residue arginine 17. The active-site Proton acceptor is histidine 42. Positions 44 and 49 each coordinate 1-deoxy-D-xylulose 5-phosphate. The active-site Proton acceptor is the glutamate 69. A 1-deoxy-D-xylulose 5-phosphate-binding site is contributed by threonine 99. The active-site Proton donor is the histidine 212. 3-amino-2-oxopropyl phosphate is bound by residues glycine 213 and 234-235 (GH).

This sequence belongs to the PNP synthase family. As to quaternary structure, homooctamer; tetramer of dimers.

The protein localises to the cytoplasm. It catalyses the reaction 3-amino-2-oxopropyl phosphate + 1-deoxy-D-xylulose 5-phosphate = pyridoxine 5'-phosphate + phosphate + 2 H2O + H(+). It participates in cofactor biosynthesis; pyridoxine 5'-phosphate biosynthesis; pyridoxine 5'-phosphate from D-erythrose 4-phosphate: step 5/5. Catalyzes the complicated ring closure reaction between the two acyclic compounds 1-deoxy-D-xylulose-5-phosphate (DXP) and 3-amino-2-oxopropyl phosphate (1-amino-acetone-3-phosphate or AAP) to form pyridoxine 5'-phosphate (PNP) and inorganic phosphate. This chain is Pyridoxine 5'-phosphate synthase, found in Nautilia profundicola (strain ATCC BAA-1463 / DSM 18972 / AmH).